The primary structure comprises 320 residues: Glyoxylate/hydroxypyruvate reductase B (320 aa).

Catalysis depends on residues Arg-233 and Glu-262. His-281 acts as the Proton donor in catalysis.

This sequence belongs to the D-isomer specific 2-hydroxyacid dehydrogenase family. GhrB subfamily. As to quaternary structure, homodimer.

It is found in the cytoplasm. The enzyme catalyses glycolate + NADP(+) = glyoxylate + NADPH + H(+). It carries out the reaction (R)-glycerate + NAD(+) = 3-hydroxypyruvate + NADH + H(+). It catalyses the reaction (R)-glycerate + NADP(+) = 3-hydroxypyruvate + NADPH + H(+). Catalyzes the NADPH-dependent reduction of glyoxylate and hydroxypyruvate into glycolate and glycerate, respectively. The polypeptide is Glyoxylate/hydroxypyruvate reductase B (Pectobacterium carotovorum subsp. carotovorum (strain PC1)).